Consider the following 374-residue polypeptide: MMKRNILAVVIPALLAAGAANAAEIYNKDGNKLDLYGKVDGLHYFSKDKGNDGDQTYVRFGFKGETQITDQLTGYGQWEYNVQSNHAESQGTEGTKTRLGFAGLKFADYGSFDYGRNYGVLYDVEGWTDMLPEFGGDTYTYSDNFMTGRTNGVATYRNNNFFGLVDGLNFALQYQGKNQNDGRDVKKQNGDGWGISSTYDIGEGVSFGAAYASSNRTDDQKLRSNERGDKADAWTVGAKYDANNVYLAAMYAETRNMTPFGGGNFTNTCAATENCGGFASKTQNFEVTAQYQFDFGLRPEVSYLQSKGKNLNVPGVGSDQDLVKYVSVGTTYYFNKNMSTYVDYKINLLDDNDFTKATGIATDDIVGVGLVYQF.

Positions 1–21 (MMKRNILAVVIPALLAAGAAN) are cleaved as a signal peptide. A beta stranded membrane pass occupies residues 22–27 (AAEIYN). Position 28 (K28) is a topological domain, periplasmic. A beta stranded transmembrane segment spans residues 29–44 (DGNKLDLYGKVDGLHY). Over 45 to 55 (FSKDKGNDGDQ) the chain is Extracellular. A beta stranded transmembrane segment spans residues 56 to 68 (TYVRFGFKGETQI). Topologically, residues 69–70 (TD) are periplasmic. The beta stranded transmembrane segment at 71-83 (QLTGYGQWEYNVQ) threads the bilayer. Over 84–97 (SNHAESQGTEGTKT) the chain is Extracellular. Residues 98–107 (RLGFAGLKFA) form a beta stranded membrane-spanning segment. The Periplasmic segment spans residues 108–110 (DYG). Residues 111 to 116 (SFDYGR) form a beta stranded membrane-spanning segment. The Extracellular portion of the chain corresponds to 117 to 151 (NYGVLYDVEGWTDMLPEFGGDTYTYSDNFMTGRTN). A beta stranded transmembrane segment spans residues 152–158 (GVATYRN). Over 159 to 166 (NNFFGLVD) the chain is Periplasmic. Residues 167-178 (GLNFALQYQGKN) form a beta stranded membrane-spanning segment. Residues 179 to 190 (QNDGRDVKKQNG) are Extracellular-facing. Residues 191–201 (DGWGISSTYDI) traverse the membrane as a beta stranded segment. At 202-203 (GE) the chain is on the periplasmic side. The chain crosses the membrane as a beta stranded span at residues 204–216 (GVSFGAAYASSNR). The Extracellular segment spans residues 217–230 (TDDQKLRSNERGDK). The chain crosses the membrane as a beta stranded span at residues 231–242 (ADAWTVGAKYDA). N243 is a topological domain (periplasmic). The chain crosses the membrane as a beta stranded span at residues 244–255 (NVYLAAMYAETR). At 256-280 (NMTPFGGGNFTNTCAATENCGGFAS) the chain is on the extracellular side. The chain crosses the membrane as a beta stranded span at residues 281-293 (KTQNFEVTAQYQF). Over 294 to 295 (DF) the chain is Periplasmic. The chain crosses the membrane as a beta stranded span at residues 296–309 (GLRPEVSYLQSKGK). The Extracellular portion of the chain corresponds to 310 to 322 (NLNVPGVGSDQDL). A beta stranded transmembrane segment spans residues 323–334 (VKYVSVGTTYYF). Over 335–336 (NK) the chain is Periplasmic. A beta stranded membrane pass occupies residues 337-346 (NMSTYVDYKI). The Extracellular segment spans residues 347 to 364 (NLLDDNDFTKATGIATDD). A beta stranded transmembrane segment spans residues 365-374 (IVGVGLVYQF).

Belongs to the Gram-negative porin family. Homotrimer.

Its subcellular location is the cell outer membrane. Its function is as follows. Forms pores that allow passive diffusion of small molecules across the outer membrane. The chain is Outer membrane protein F (ompF) from Serratia marcescens.